Consider the following 693-residue polypeptide: UvrABC system protein B (693 aa).

The 154-residue stretch at 35–188 (ERIKNGEKDV…DDLLRKFVSM (154 aa)) folds into the Helicase ATP-binding domain. 48–55 (GATGTGKS) contacts ATP. Residues 101–124 (YYDYYQPEAYVAQTDTFIEKDSSV) carry the Beta-hairpin motif. The Helicase C-terminal domain maps to 438-604 (QIDDLLGEIK…PLRKKIADIT (167 aa)). One can recognise a UVR domain in the interval 648-683 (VGLIEQLTEQMHAAAGELQFELAARLRDEVGELKKE).

This sequence belongs to the UvrB family. As to quaternary structure, forms a heterotetramer with UvrA during the search for lesions. Interacts with UvrC in an incision complex.

It is found in the cytoplasm. Functionally, the UvrABC repair system catalyzes the recognition and processing of DNA lesions. A damage recognition complex composed of 2 UvrA and 2 UvrB subunits scans DNA for abnormalities. Upon binding of the UvrA(2)B(2) complex to a putative damaged site, the DNA wraps around one UvrB monomer. DNA wrap is dependent on ATP binding by UvrB and probably causes local melting of the DNA helix, facilitating insertion of UvrB beta-hairpin between the DNA strands. Then UvrB probes one DNA strand for the presence of a lesion. If a lesion is found the UvrA subunits dissociate and the UvrB-DNA preincision complex is formed. This complex is subsequently bound by UvrC and the second UvrB is released. If no lesion is found, the DNA wraps around the other UvrB subunit that will check the other stand for damage. This Arthrobacter sp. (strain FB24) protein is UvrABC system protein B.